We begin with the raw amino-acid sequence, 213 residues long: Probable inactive serine/threonine-protein kinase DDB_G0280559 (213 aa).

In terms of domain architecture, Protein kinase spans 1 to 211 (MVLRYSYVFK…WNEIVNHSFF (211 aa)).

The protein belongs to the protein kinase superfamily. Ser/Thr protein kinase family.

The polypeptide is Probable inactive serine/threonine-protein kinase DDB_G0280559 (Dictyostelium discoideum (Social amoeba)).